Reading from the N-terminus, the 87-residue chain is Insertion element IS407 uncharacterized 10.0 kDa protein (87 aa).

This sequence belongs to the transposase 8 family.

This chain is Insertion element IS407 uncharacterized 10.0 kDa protein, found in Burkholderia multivorans (strain ATCC 17616 / 249).